Consider the following 651-residue polypeptide: Intraflagellar transport protein 70A (651 aa).

TPR repeat units lie at residues 8-41, 42-75, 140-173, 175-207, 379-410, 411-443, and 445-478; these read DGEYTATVYKMIKEGRYGDAIHILSKEHQKHTKS, RAALSLLGYCYYHMQDFTNAAECYEQLTQLHPEV, PDYDVDLGCLLYKEGEFEEACKKFMSSMNVLGYQ, DLAYNIALCYYSLKQYASALKYIAEIIERGIRE, VTKQVQEARHNRDDESLKKYVQDYDEVLEKYI, PVLMAQAKIYWNRENYSMVEKIFHKSLEFCNEH, and TWKLNVAHVLFMQDNKYKEAIGFYEPIVKKHYEN. A coiled-coil region spans residues 494–521; it reads YIMTSQNEEAEELMRKIEKEEEQISYDD. A TPR 8 repeat occupies 530–563; the sequence is CIVNLVIGTLYCAKGNYDFGISRVIKSLEPYNKK.

This sequence belongs to the TTC30/dfy-1/fleer family. In terms of tissue distribution, localizes to the cilia of many ciliated epithelial cell types including pronephric cells, olfactory placode, the brain ventricle and lateral line organs.

It localises to the cell projection. Its subcellular location is the cilium. Plays a role in anterograde intraflagellar transport (IFT), the process by which cilia precursors are transported from the base of the cilium to the site of their incorporation at the tip. Required for polyglutamylation of axonemal tubulin, which is a prerequisite for correct assembly of cilia and for normal cilia beat amplitude. Does not seem to be required for neuronal microtubule polyglutamylation. This chain is Intraflagellar transport protein 70A (ift70a), found in Danio rerio (Zebrafish).